Consider the following 397-residue polypeptide: Pectate lyase 4 (397 aa).

Positions 1-25 (MGIKHCCYILYFTLALVTLVQAGRL) are cleaved as a signal peptide. An N-linked (GlcNAc...) asparagine glycan is attached at Asn-36. A disulfide bridge connects residues Cys-54 and Cys-71. PbH1 repeat units lie at residues 159-202 (VKNV…HVTG), 203-224 (SSDI…VDVN), and 227-248 (STGV…LLGA). Ca(2+) contacts are provided by Asp-194, Asp-218, and Asp-222. Arg-274 is a catalytic residue.

It belongs to the polysaccharide lyase 1 family. Amb a subfamily. Monomer. The cofactor is Ca(2+). In terms of processing, the N-terminus is blocked. In terms of tissue distribution, pollen and flowers.

The enzyme catalyses Eliminative cleavage of (1-&gt;4)-alpha-D-galacturonan to give oligosaccharides with 4-deoxy-alpha-D-galact-4-enuronosyl groups at their non-reducing ends.. The protein operates within glycan metabolism; pectin degradation; 2-dehydro-3-deoxy-D-gluconate from pectin: step 2/5. Its function is as follows. Has pectate lyase activity. In Ambrosia artemisiifolia (Common ragweed), this protein is Pectate lyase 4.